The sequence spans 134 residues: Large ribosomal subunit protein uL16c (134 aa).

This sequence belongs to the universal ribosomal protein uL16 family. As to quaternary structure, part of the 50S ribosomal subunit.

Its subcellular location is the plastid. It localises to the chloroplast. This is Large ribosomal subunit protein uL16c from Gnetum parvifolium (Small-leaved jointfir).